Consider the following 178-residue polypeptide: Caveolin-1 (178 aa).

Position 2 is an N-acetylserine (Ser2). A Phosphoserine modification is found at Ser2. Residues 2-94 are required for homooligomerization; it reads SGGKYVDSEG…WKASFTTFTV (93 aa). The Cytoplasmic segment spans residues 2–104; sequence SGGKYVDSEG…TKYWFYRLLS (103 aa). The residue at position 5 (Lys5) is an N6-acetyllysine; alternate. A Glycyl lysine isopeptide (Lys-Gly) (interchain with G-Cter in ubiquitin); alternate cross-link involves residue Lys5. Tyr6 is subject to Phosphotyrosine. At Ser9 the chain carries Phosphoserine. Residue Tyr14 is modified to Phosphotyrosine; by ABL1. Tyr25 carries the post-translational modification Phosphotyrosine. Residues Lys26, Lys30, Lys39, Lys47, and Lys57 each participate in a glycyl lysine isopeptide (Lys-Gly) (interchain with G-Cter in ubiquitin) cross-link. Positions 82-94 are interaction with CAVIN3; that stretch reads DGIWKASFTTFTV. An intramembrane region (helical) is located at residues 105 to 125; that stretch reads GIFGIPMALIWGVYFAILSFL. The Cytoplasmic segment spans residues 126–178; the sequence is HIWAVVPCIKSFLIEIQCISRVYSIYVHTFCDPLFEAIGKIFSNIRISTQKEI. The tract at residues 131–142 is interacts with SPRY1, SPRY2, SPRY3 and SPRY4; that stretch reads VPCIKSFLIEIQ. S-palmitoyl cysteine attachment occurs at residues Cys133, Cys143, and Cys156. The segment at 149–160 is interacts with SPRY1, SPRY2, and SPRY4; that stretch reads SIYVHTFCDPLF. The interacts with SPRY1, SPRY2, SPRY3 and SPRY4 stretch occupies residues 167-178; sequence FSNIRISTQKEI.

It belongs to the caveolin family. In terms of assembly, homooligomer. Interacts with GLIPR2. Interacts with NOSTRIN. Interacts with SNAP25 and STX1A. Interacts (via the N-terminus) with DPP4; the interaction is direct. Interacts with CTNNB1, CDH1 and JUP. Interacts with PACSIN2; this interaction induces membrane tubulation. Interacts with SLC7A9. Interacts with BMX and BTK. Interacts with TGFBR1. Interacts with CAVIN3 (via leucine-zipper domain) in a cholesterol-sensitive manner. Interacts with CAVIN1. Interacts with EHD2 in a cholesterol-dependent manner. Forms a ternary complex with UBXN6 and VCP; mediates CAV1 targeting to lysosomes for degradation. Interacts with ABCG1; this interaction regulates ABCG1-mediated cholesterol efflux. Interacts with NEU3; this interaction enhances NEU3 sialidase activity within caveola. Interacts (via C-terminus) with SPRY1, SPRY2 (via C-terminus), SPRY3, and SPRY4. Interacts with IGFBP5; this interaction allows trafficking of IGFBP5 from the plasma membrane to the nucleus. Post-translationally, phosphorylated at Tyr-14 by ABL1 in response to oxidative stress. Ubiquitinated. Undergo monoubiquitination and multi- and/or polyubiquitination. Monoubiquitination of N-terminal lysines promotes integration in a ternary complex with UBXN6 and VCP which promotes oligomeric CAV1 targeting to lysosomes for degradation. Ubiquitinated by ZNRF1; leading to degradation and modulation of the TLR4-mediated immune response.

Its subcellular location is the golgi apparatus membrane. It is found in the cell membrane. The protein localises to the membrane. It localises to the caveola. The protein resides in the membrane raft. May act as a scaffolding protein within caveolar membranes. Forms a stable heterooligomeric complex with CAV2 that targets to lipid rafts and drives caveolae formation. Mediates the recruitment of CAVIN proteins (CAVIN1/2/3/4) to the caveolae. Interacts directly with G-protein alpha subunits and can functionally regulate their activity. Involved in the costimulatory signal essential for T-cell receptor (TCR)-mediated T-cell activation. Its binding to DPP4 induces T-cell proliferation and NF-kappa-B activation in a T-cell receptor/CD3-dependent manner. Recruits CTNNB1 to caveolar membranes and may regulate CTNNB1-mediated signaling through the Wnt pathway. Negatively regulates TGFB1-mediated activation of SMAD2/3 by mediating the internalization of TGFBR1 from membrane rafts leading to its subsequent degradation. Binds 20(S)-hydroxycholesterol (20(S)-OHC). In Echinops telfairi (Lesser hedgehog tenrec), this protein is Caveolin-1 (CAV1).